A 215-amino-acid polypeptide reads, in one-letter code: Lysozyme-like protein 5 (215 aa).

A signal peptide spans 1-17 (MKHFFITILLFCSVVSA). A Ch-type lysozyme domain is found at 18–215 (ARNGIDINSP…GVSVDMNYIP (198 aa)). Active-site residues include Asp-23, Asp-113, and Glu-115.

Belongs to the glycosyl hydrolase 25 family.

In terms of biological role, plays a role in resistance to Gram-positive bacteria S.aureus or B.thuringiensis infection. This Caenorhabditis elegans protein is Lysozyme-like protein 5.